The primary structure comprises 208 residues: LexA repressor (208 aa).

Residues 29-49 (IREIGDSLNINSTSTVHNNIL) constitute a DNA-binding region (H-T-H motif). Catalysis depends on for autocatalytic cleavage activity residues Ser-131 and Lys-168.

This sequence belongs to the peptidase S24 family. As to quaternary structure, homodimer.

It carries out the reaction Hydrolysis of Ala-|-Gly bond in repressor LexA.. Represses a number of genes involved in the response to DNA damage (SOS response), including recA and lexA. In the presence of single-stranded DNA, RecA interacts with LexA causing an autocatalytic cleavage which disrupts the DNA-binding part of LexA, leading to derepression of the SOS regulon and eventually DNA repair. The protein is LexA repressor of Finegoldia magna (strain ATCC 29328 / DSM 20472 / WAL 2508) (Peptostreptococcus magnus).